The sequence spans 430 residues: tRNA(Ile)-lysidine synthase (430 aa).

21–26 (SGGLDS) provides a ligand contact to ATP.

This sequence belongs to the tRNA(Ile)-lysidine synthase family.

It is found in the cytoplasm. The enzyme catalyses cytidine(34) in tRNA(Ile2) + L-lysine + ATP = lysidine(34) in tRNA(Ile2) + AMP + diphosphate + H(+). Ligates lysine onto the cytidine present at position 34 of the AUA codon-specific tRNA(Ile) that contains the anticodon CAU, in an ATP-dependent manner. Cytidine is converted to lysidine, thus changing the amino acid specificity of the tRNA from methionine to isoleucine. The sequence is that of tRNA(Ile)-lysidine synthase from Salmonella heidelberg (strain SL476).